The following is a 71-amino-acid chain: Small ribosomal subunit protein bS21 (71 aa).

The disordered stretch occupies residues 37 to 71; it reads HYEKPTQERKRKAAAAVKRHMKRLSREQARRRRLY. Residues 45 to 71 are compositionally biased toward basic residues; that stretch reads RKRKAAAAVKRHMKRLSREQARRRRLY.

Belongs to the bacterial ribosomal protein bS21 family.

This chain is Small ribosomal subunit protein bS21, found in Alkalilimnicola ehrlichii (strain ATCC BAA-1101 / DSM 17681 / MLHE-1).